The following is a 308-amino-acid chain: Ribosomal RNA small subunit methyltransferase H (308 aa).

Residues 38–40, D58, F82, D99, and Q106 each bind S-adenosyl-L-methionine; that span reads GGH.

The protein belongs to the methyltransferase superfamily. RsmH family.

It localises to the cytoplasm. The catalysed reaction is cytidine(1402) in 16S rRNA + S-adenosyl-L-methionine = N(4)-methylcytidine(1402) in 16S rRNA + S-adenosyl-L-homocysteine + H(+). Its function is as follows. Specifically methylates the N4 position of cytidine in position 1402 (C1402) of 16S rRNA. The chain is Ribosomal RNA small subunit methyltransferase H from Acidovorax ebreus (strain TPSY) (Diaphorobacter sp. (strain TPSY)).